Consider the following 147-residue polypeptide: Hemoglobin anodic subunit beta (147 aa).

The region spanning 2–147 (EWTDGERTAI…VTSALARQYH (146 aa)) is the Globin domain. Heme b contacts are provided by His63 and His92.

This sequence belongs to the globin family. In terms of assembly, heterotetramer of two alpha chains and two beta chains. As to expression, red blood cells.

Involved in oxygen transport from gills to the various peripheral tissues. The sequence is that of Hemoglobin anodic subunit beta from Gymnothorax unicolor (Brown moray).